The sequence spans 1710 residues: Latrophilin Cirl (1710 aa).

At 1 to 767 the chain is on the extracellular side; sequence MLPTILSISY…LFTMFDGNMR (767 aa). The 90-residue stretch at 25–114 folds into the SUEL-type lectin domain; sequence ACEGKKLTIE…KYLEAHYQCI (90 aa). Asn-142 carries an N-linked (GlcNAc...) asparagine glycan. Residues 183-304 are disordered; it reads QHTAVTHSTP…SGSVVPGNGS (122 aa). 2 stretches are compositionally biased toward polar residues: residues 185 to 198 and 256 to 265; these read TAVT…STTA and NATSPSNTRI. An N-linked (GlcNAc...) asparagine glycan is attached at Asn-256. Low complexity-rich tracts occupy residues 275–285 and 295–304; these read DDGTLLTTKSS and SGSVVPGNGS. N-linked (GlcNAc...) asparagine glycosylation is found at Asn-302 and Asn-341. Positions 376 to 400 are disordered; the sequence is YDEYDDDPSSTTPATSSADCLHNSS. Over residues 384 to 394 the composition is skewed to low complexity; the sequence is SSTTPATSSAD. N-linked (GlcNAc...) asparagine glycans are attached at residues Asn-398, Asn-655, Asn-703, and Asn-730. One can recognise a GAIN-B domain in the interval 561–754; sequence RSVVQKVKNI…AILMDVVDEH (194 aa). 2 cysteine pairs are disulfide-bonded: Cys-709–Cys-736 and Cys-724–Cys-738. The tract at residues 709–754 is GPS; it reads CVFWNYIDHAWSANGCSLESTNRTHSVCSCNHLTNFAILMDVVDEH. A helical membrane pass occupies residues 768–788; that stretch reads IFIYISIGICVVFIVIALLTL. Over 789 to 801 the chain is Cytoplasmic; the sequence is KLFNGVFVKSART. A helical transmembrane segment spans residues 802-822; the sequence is SIYTSIYLCLLAIELLFLLGI. The Extracellular portion of the chain corresponds to 823-828; the sequence is EQTETS. Residues 829 to 849 traverse the membrane as a helical segment; the sequence is IFCGFITIFLHCAILSGTAWF. The Cytoplasmic portion of the chain corresponds to 850-875; it reads CYEAFHSYSTLTSDELLLEVDQTPKV. A helical transmembrane segment spans residues 876–896; that stretch reads NCYYLLSYGLSLSVVAISLVI. Residues 897 to 920 are Extracellular-facing; it reads DPSTYTQNDYCVLMEANALFYATF. Residues 921-941 form a helical membrane-spanning segment; sequence VMPVLVFFVAAIGYTFLSWII. Residues 942–968 are Cytoplasmic-facing; that stretch reads MCRKSRTGLKTKEHTRLASVRFDIRCS. Residues 969–989 traverse the membrane as a helical segment; it reads FVFLLLLSAVWCSAYFYLRGA. Residues 990–999 lie on the Extracellular side of the membrane; sequence KMDDDTADVY. Residues 1000–1020 traverse the membrane as a helical segment; that stretch reads GYCFICFNTLLGLYIFVFHCI. The Cytoplasmic segment spans residues 1021 to 1710; sequence QNEKIRREYR…VRCYLEPLAK (690 aa). Phosphoserine occurs at positions 1156, 1253, 1260, 1329, and 1330. Residues 1234-1259 form a disordered region; that stretch reads KPNSGQHGKKKRGAGGVPASPSGSLH. Disordered stretches follow at residues 1452 to 1540 and 1568 to 1690; these read GGGS…SDER and DYGA…QQRH. The span at 1458–1483 shows a compositional bias: low complexity; the sequence is GGSVSSRSQQQQLKKQQQQQSLAQQR. Composition is skewed to acidic residues over residues 1491–1505 and 1515–1528; these read DDDD…EEAT and CDED…DLED. Residues 1638–1650 are compositionally biased toward polar residues; that stretch reads QTPAQKRQQLQKL. Over residues 1651 to 1672 the composition is skewed to low complexity; that stretch reads SPQSTTSSSSHTSHSNPNPHPH. Over residues 1673–1689 the composition is skewed to basic residues; that stretch reads QLTHPHPHQHPPHHQQR.

The protein belongs to the G-protein coupled receptor 2 family. LN-TM7 subfamily. As to quaternary structure, forms a heterodimer, consisting of a large extracellular region non-covalently linked to a seven-transmembrane moiety. Post-translationally, proteolytically cleaved into 2 subunits, an extracellular subunit and a seven-transmembrane subunit.

The protein resides in the cell membrane. This chain is Latrophilin Cirl, found in Drosophila erecta (Fruit fly).